Reading from the N-terminus, the 70-residue chain is DNA-directed RNA polymerase subunit omega (70 aa).

This sequence belongs to the RNA polymerase subunit omega family. As to quaternary structure, the RNAP catalytic core consists of 2 alpha, 1 beta, 1 beta' and 1 omega subunit. When a sigma factor is associated with the core the holoenzyme is formed, which can initiate transcription.

It catalyses the reaction RNA(n) + a ribonucleoside 5'-triphosphate = RNA(n+1) + diphosphate. Functionally, promotes RNA polymerase assembly. Latches the N- and C-terminal regions of the beta' subunit thereby facilitating its interaction with the beta and alpha subunits. The protein is DNA-directed RNA polymerase subunit omega of Marinobacter nauticus (strain ATCC 700491 / DSM 11845 / VT8) (Marinobacter aquaeolei).